A 656-amino-acid polypeptide reads, in one-letter code: Chaperone protein HtpG (656 aa).

An a; substrate-binding region spans residues 1 to 364 (MSEQNPTDSK…SADLPLNVSR (364 aa)). The tract at residues 365 to 583 (EILQESRDVK…EGELSPQMIQ (219 aa)) is b. The interval 584-656 (MLKQMGQDVP…LRRVNELLMK (73 aa)) is c.

It belongs to the heat shock protein 90 family. As to quaternary structure, homodimer.

The protein resides in the cytoplasm. Functionally, molecular chaperone. Has ATPase activity. The chain is Chaperone protein HtpG from Psychrobacter arcticus (strain DSM 17307 / VKM B-2377 / 273-4).